The sequence spans 528 residues: Lysine--tRNA ligase (528 aa).

Positions 36-44 (PSGTVHIGN) match the 'HIGH' region motif. Positions 287–291 (KMSSS) match the 'KMSKS' region motif.

Belongs to the class-I aminoacyl-tRNA synthetase family.

The protein resides in the cytoplasm. It catalyses the reaction tRNA(Lys) + L-lysine + ATP = L-lysyl-tRNA(Lys) + AMP + diphosphate. The protein is Lysine--tRNA ligase (lysS) of Treponema pallidum (strain Nichols).